The primary structure comprises 304 residues: Elongation factor Ts (304 aa).

The involved in Mg(2+) ion dislocation from EF-Tu stretch occupies residues 82-85 (TDFV).

This sequence belongs to the EF-Ts family.

The protein resides in the cytoplasm. Associates with the EF-Tu.GDP complex and induces the exchange of GDP to GTP. It remains bound to the aminoacyl-tRNA.EF-Tu.GTP complex up to the GTP hydrolysis stage on the ribosome. The polypeptide is Elongation factor Ts (Symbiobacterium thermophilum (strain DSM 24528 / JCM 14929 / IAM 14863 / T)).